Consider the following 446-residue polypeptide: Methylenetetrahydrofolate--tRNA-(uracil-5-)-methyltransferase TrmFO (446 aa).

Residue Gly-8–Gly-13 participates in FAD binding.

Belongs to the MnmG family. TrmFO subfamily. It depends on FAD as a cofactor.

The protein localises to the cytoplasm. The enzyme catalyses uridine(54) in tRNA + (6R)-5,10-methylene-5,6,7,8-tetrahydrofolate + NADH + H(+) = 5-methyluridine(54) in tRNA + (6S)-5,6,7,8-tetrahydrofolate + NAD(+). It carries out the reaction uridine(54) in tRNA + (6R)-5,10-methylene-5,6,7,8-tetrahydrofolate + NADPH + H(+) = 5-methyluridine(54) in tRNA + (6S)-5,6,7,8-tetrahydrofolate + NADP(+). Catalyzes the folate-dependent formation of 5-methyl-uridine at position 54 (M-5-U54) in all tRNAs. This chain is Methylenetetrahydrofolate--tRNA-(uracil-5-)-methyltransferase TrmFO, found in Zymomonas mobilis subsp. mobilis (strain ATCC 31821 / ZM4 / CP4).